A 195-amino-acid chain; its full sequence is ATP-dependent Clp protease proteolytic subunit (195 aa).

The active-site Nucleophile is serine 97. The active site involves histidine 122.

The protein belongs to the peptidase S14 family. In terms of assembly, fourteen ClpP subunits assemble into 2 heptameric rings which stack back to back to give a disk-like structure with a central cavity, resembling the structure of eukaryotic proteasomes.

Its subcellular location is the cytoplasm. It carries out the reaction Hydrolysis of proteins to small peptides in the presence of ATP and magnesium. alpha-casein is the usual test substrate. In the absence of ATP, only oligopeptides shorter than five residues are hydrolyzed (such as succinyl-Leu-Tyr-|-NHMec, and Leu-Tyr-Leu-|-Tyr-Trp, in which cleavage of the -Tyr-|-Leu- and -Tyr-|-Trp bonds also occurs).. Cleaves peptides in various proteins in a process that requires ATP hydrolysis. Has a chymotrypsin-like activity. Plays a major role in the degradation of misfolded proteins. The chain is ATP-dependent Clp protease proteolytic subunit from Lactobacillus gasseri (strain ATCC 33323 / DSM 20243 / BCRC 14619 / CIP 102991 / JCM 1131 / KCTC 3163 / NCIMB 11718 / NCTC 13722 / AM63).